The primary structure comprises 242 residues: AA9 family lytic polysaccharide monooxygenase F (242 aa).

The signal sequence occupies residues 1–20; the sequence is MVQFKLSTASLLALASYAAA. Cu(2+) is bound at residue H21. The disordered stretch occupies residues 31 to 53; that stretch reads GQTYPGADPHNPNPESPGWQAEN. 2 disulfide bridges follow: C71–C192 and C112–C116. A Cu(2+)-binding site is contributed by H101. H178 and Q187 together coordinate O2. Y189 is a binding site for Cu(2+).

This sequence belongs to the polysaccharide monooxygenase AA9 family. It depends on Cu(2+) as a cofactor.

Its subcellular location is the secreted. It catalyses the reaction [(1-&gt;4)-beta-D-glucosyl]n+m + reduced acceptor + O2 = 4-dehydro-beta-D-glucosyl-[(1-&gt;4)-beta-D-glucosyl]n-1 + [(1-&gt;4)-beta-D-glucosyl]m + acceptor + H2O.. Its function is as follows. Lytic polysaccharide monooxygenase (LPMO) that depolymerizes crystalline and amorphous polysaccharides via the oxidation of scissile alpha- or beta-(1-4)-glycosidic bonds, yielding C1 or C4 oxidation products. Catalysis by LPMOs requires the reduction of the active-site copper from Cu(II) to Cu(I) by a reducing agent and H(2)O(2) or O(2) as a cosubstrate. Active on hemicelluloses, including xylan, glucomannan, and xyloglucan. Shows clear activity on cellooligosaccharides, generating C4 oxidation products. Has no activity on ivory nut mannan (INM), a linear beta-1,4-linked mannan without substitutions. In Malbranchea cinnamomea (Thermophilic fungus), this protein is AA9 family lytic polysaccharide monooxygenase F.